The primary structure comprises 401 residues: Proline-rich protein 30 (401 aa).

Over residues Pro69 to Asp80 the composition is skewed to polar residues. Disordered regions lie at residues Pro69–Ser93, Ser129–Gly191, and Gln357–Ser401. 2 stretches are compositionally biased toward low complexity: residues Pro83–Ser93 and Ser129–Ser147. 2 stretches are compositionally biased toward polar residues: residues Arg148–Ser186 and Gln357–Leu368.

The sequence is that of Proline-rich protein 30 (Prr30) from Mus musculus (Mouse).